The following is a 444-amino-acid chain: Inward rectifier potassium channel 4 (444 aa).

At Met1–Trp55 the chain is on the cytoplasmic side. A helical transmembrane segment spans residues Arg56–Ile80. The Extracellular portion of the chain corresponds to Ala81–Gly119. An intramembrane region (helical; Pore-forming) is located at residues Phe120–Gln131. The segment at residues Thr132 to Phe138 is an intramembrane region (pore-forming). Residues Thr133 to Phe138 carry the Selectivity filter motif. Residues Arg139–Leu147 are Extracellular-facing. Residues Ala148 to Thr169 form a helical membrane-spanning segment. Residues Ile170–Ile444 are Cytoplasmic-facing. A PDZ-binding motif is present at residues Ser442–Ile444.

Belongs to the inward rectifier-type potassium channel (TC 1.A.2.1) family. KCNJ4 subfamily. Homomultimeric and heteromultimeric association with KCNJ2 and KCNJ12. Interacts with DLG2 and DLG4. Associates, via its PDZ-recognition domain, with a complex containing LIN7A, LIN7B, LIN7C, DLG1, CASK and APBA1. Interacts with TAX1BP3. TAX1BP3 competes with LIN7 family members for KCNJ4 binding.

It is found in the cell membrane. It localises to the postsynaptic cell membrane. The protein resides in the cytoplasmic vesicle membrane. It catalyses the reaction K(+)(in) = K(+)(out). Inward rectifier potassium channels are characterized by a greater tendency to allow potassium to flow into the cell rather than out of it. Their voltage dependence is regulated by the concentration of extracellular potassium; as external potassium is raised, the voltage range of the channel opening shifts to more positive voltages. The inward rectification is mainly due to the blockage of outward current by internal magnesium. Can be blocked by extracellular barium and cesium. The chain is Inward rectifier potassium channel 4 (KCNJ4) from Mesocricetus auratus (Golden hamster).